A 248-amino-acid polypeptide reads, in one-letter code: Transmembrane protein 223 (248 aa).

3 consecutive transmembrane segments (helical) span residues 46–68 (IFRPLVFPVRVASAFTFTSAAVA), 84–104 (LLAIFCGGQFLFWAYLGHFAF), and 140–160 (YGFTSGCLIIGGGILALALLF).

The protein belongs to the TMEM223 family.

The protein resides in the mitochondrion inner membrane. Functionally, mitochondrial ribosome-associated protein involved in the first steps of cytochrome c oxidase complex (complex IV) biogenesis. Stimulates the translation of MT-CO1 mRNA and is a constituent of early MT-CO1 assembly intermediates. This is Transmembrane protein 223 from Danio rerio (Zebrafish).